We begin with the raw amino-acid sequence, 399 residues long: L-asparaginase-like protein GG20738 (399 aa).

An N-terminal signal peptide occupies residues 1-22 (MLAQSCCLRLLILLLLCKSTCS). Intrachain disulfides connect cysteine 90/cysteine 95, cysteine 189/cysteine 205, and cysteine 344/cysteine 371.

It belongs to the Ntn-hydrolase family.

The protein is L-asparaginase-like protein GG20738 of Drosophila erecta (Fruit fly).